The sequence spans 348 residues: Dihydroorotase (348 aa).

The Zn(2+) site is built by His17 and His19. Residues His19–Arg21 and Asn45 contribute to the substrate site. Zn(2+) is bound by residues Lys103, His140, and His178. Lys103 carries the post-translational modification N6-carboxylysine. Residue His140 participates in substrate binding. A substrate-binding site is contributed by Leu223. Asp251 contributes to the Zn(2+) binding site. The active site involves Asp251. Residues His255 and Ala267 each contribute to the substrate site.

The protein belongs to the metallo-dependent hydrolases superfamily. DHOase family. Class II DHOase subfamily. As to quaternary structure, homodimer. The cofactor is Zn(2+).

The catalysed reaction is (S)-dihydroorotate + H2O = N-carbamoyl-L-aspartate + H(+). The protein operates within pyrimidine metabolism; UMP biosynthesis via de novo pathway; (S)-dihydroorotate from bicarbonate: step 3/3. Catalyzes the reversible cyclization of carbamoyl aspartate to dihydroorotate. The protein is Dihydroorotase of Salmonella typhi.